The primary structure comprises 372 residues: D-alanine--D-alanine ligase (372 aa).

The ATP-grasp domain maps to 145–349; that stretch reads KTVLRAGGIP…CPNLLDQLIE (205 aa). Residue 176-231 coordinates ATP; it reads DRWGTSELFVKAVSLGSSVATLPVKTETEFTKAVKEVFRYDDRLMVEPRIRGREIE. Mg(2+)-binding residues include Asp-303, Glu-316, and Asn-318.

This sequence belongs to the D-alanine--D-alanine ligase family. The cofactor is Mg(2+). Mn(2+) is required as a cofactor.

It is found in the cytoplasm. It catalyses the reaction 2 D-alanine + ATP = D-alanyl-D-alanine + ADP + phosphate + H(+). It participates in cell wall biogenesis; peptidoglycan biosynthesis. In terms of biological role, cell wall formation. This Coxiella burnetii (strain RSA 331 / Henzerling II) protein is D-alanine--D-alanine ligase.